A 371-amino-acid polypeptide reads, in one-letter code: uncharacterized protein (371 aa).

Residues 17 to 33 (FLLFSVVLIIVMTTLVF) traverse the membrane as a helical segment.

To S.pombe SpBC4C3.08 and SpBC4C3.09.

Its subcellular location is the membrane. This is an uncharacterized protein from Schizosaccharomyces pombe (strain 972 / ATCC 24843) (Fission yeast).